The chain runs to 203 residues: Dephospho-CoA kinase (203 aa).

The DPCK domain maps to serine 3 to alanine 201. Glycine 11 to threonine 16 is a binding site for ATP.

Belongs to the CoaE family.

Its subcellular location is the cytoplasm. It carries out the reaction 3'-dephospho-CoA + ATP = ADP + CoA + H(+). The protein operates within cofactor biosynthesis; coenzyme A biosynthesis; CoA from (R)-pantothenate: step 5/5. In terms of biological role, catalyzes the phosphorylation of the 3'-hydroxyl group of dephosphocoenzyme A to form coenzyme A. This Burkholderia thailandensis (strain ATCC 700388 / DSM 13276 / CCUG 48851 / CIP 106301 / E264) protein is Dephospho-CoA kinase.